The primary structure comprises 356 residues: Histidinol-phosphate aminotransferase 1 (356 aa).

At Lys213 the chain carries N6-(pyridoxal phosphate)lysine.

The protein belongs to the class-II pyridoxal-phosphate-dependent aminotransferase family. Histidinol-phosphate aminotransferase subfamily. Homodimer. Pyridoxal 5'-phosphate is required as a cofactor.

The enzyme catalyses L-histidinol phosphate + 2-oxoglutarate = 3-(imidazol-4-yl)-2-oxopropyl phosphate + L-glutamate. It participates in amino-acid biosynthesis; L-histidine biosynthesis; L-histidine from 5-phospho-alpha-D-ribose 1-diphosphate: step 7/9. This is Histidinol-phosphate aminotransferase 1 (hisC1) from Bordetella parapertussis (strain 12822 / ATCC BAA-587 / NCTC 13253).